The primary structure comprises 120 residues: NAD(P)H-quinone oxidoreductase subunit 3 (120 aa).

The next 3 helical transmembrane spans lie at 2–22, 64–84, and 89–109; these read FVLT…LVPV, MFAL…PWAV, and LGLL…VALV.

It belongs to the complex I subunit 3 family. As to quaternary structure, NDH-1 can be composed of about 15 different subunits; different subcomplexes with different compositions have been identified which probably have different functions.

It is found in the cellular thylakoid membrane. The enzyme catalyses a plastoquinone + NADH + (n+1) H(+)(in) = a plastoquinol + NAD(+) + n H(+)(out). It catalyses the reaction a plastoquinone + NADPH + (n+1) H(+)(in) = a plastoquinol + NADP(+) + n H(+)(out). In terms of biological role, NDH-1 shuttles electrons from an unknown electron donor, via FMN and iron-sulfur (Fe-S) centers, to quinones in the respiratory and/or the photosynthetic chain. The immediate electron acceptor for the enzyme in this species is believed to be plastoquinone. Couples the redox reaction to proton translocation, and thus conserves the redox energy in a proton gradient. Cyanobacterial NDH-1 also plays a role in inorganic carbon-concentration. This Synechocystis sp. (strain ATCC 27184 / PCC 6803 / Kazusa) protein is NAD(P)H-quinone oxidoreductase subunit 3 (ndhC).